The primary structure comprises 398 residues: Succinyl-diaminopimelate desuccinylase (398 aa).

Zn(2+) is bound at residue His-68. Asp-70 is an active-site residue. Asp-101 is a Zn(2+) binding site. The active-site Proton acceptor is the Glu-135. Glu-136, Glu-164, and His-349 together coordinate Zn(2+).

The protein belongs to the peptidase M20A family. DapE subfamily. As to quaternary structure, homodimer. Requires Zn(2+) as cofactor. The cofactor is Co(2+).

The enzyme catalyses N-succinyl-(2S,6S)-2,6-diaminopimelate + H2O = (2S,6S)-2,6-diaminopimelate + succinate. It functions in the pathway amino-acid biosynthesis; L-lysine biosynthesis via DAP pathway; LL-2,6-diaminopimelate from (S)-tetrahydrodipicolinate (succinylase route): step 3/3. In terms of biological role, catalyzes the hydrolysis of N-succinyl-L,L-diaminopimelic acid (SDAP), forming succinate and LL-2,6-diaminopimelate (DAP), an intermediate involved in the bacterial biosynthesis of lysine and meso-diaminopimelic acid, an essential component of bacterial cell walls. This is Succinyl-diaminopimelate desuccinylase from Wolbachia pipientis wMel.